Consider the following 142-residue polypeptide: Large ribosomal subunit protein bL17 (142 aa).

Belongs to the bacterial ribosomal protein bL17 family. Part of the 50S ribosomal subunit. Contacts protein L32.

The sequence is that of Large ribosomal subunit protein bL17 from Bartonella henselae (strain ATCC 49882 / DSM 28221 / CCUG 30454 / Houston 1) (Rochalimaea henselae).